We begin with the raw amino-acid sequence, 447 residues long: MPEIVNIISREIVDSRGNPTVESEVHTKSGFFGLASVPSGSSLGSQEALELRDNDHARFFGKGVKKSVNIINSTIRVSLLNIDVTKQSVIDEIMINLDGTNNKSQLGANSILSVSLAIAKAAASFMGMPLYQYIARLYGMSSNVYSMPVPMMNIMNGGKHADNNLDIQEFMIVPVGAKNIKQAIQMGSEISYSLKNVLNNLGISIALGDEGGYAPNLKSHSYALELINKSIEQSNYVLGKDVVLAIDCAASELFEVSTGKYVINSEKVSFTSEEFVDYLSSLARKYCIFSIEDGQSEHDWHGFSYLTKKLGDIMQLVGDDLFVTNPNLLKMGINKNVANSILVKPNQIGSLTETLNVIKLAKESGYSTIVSHRSGETEDTSIADIAVGTSAGQIKTGPVRCSERTSKYNRLIRIEEFLKDNSKFYGVNEIKNLSAQLWMYQNKNMNI.

Q168 contacts (2R)-2-phosphoglycerate. The active-site Proton donor is the E210. Mg(2+)-binding residues include D247, E292, and D319. 4 residues coordinate (2R)-2-phosphoglycerate: K344, R373, S374, and K395. K344 functions as the Proton acceptor in the catalytic mechanism.

The protein belongs to the enolase family. In terms of assembly, component of the RNA degradosome, a multiprotein complex involved in RNA processing and mRNA degradation. The cofactor is Mg(2+).

It localises to the cytoplasm. Its subcellular location is the secreted. The protein resides in the cell surface. The enzyme catalyses (2R)-2-phosphoglycerate = phosphoenolpyruvate + H2O. It functions in the pathway carbohydrate degradation; glycolysis; pyruvate from D-glyceraldehyde 3-phosphate: step 4/5. Functionally, catalyzes the reversible conversion of 2-phosphoglycerate (2-PG) into phosphoenolpyruvate (PEP). It is essential for the degradation of carbohydrates via glycolysis. In Blochmanniella floridana, this protein is Enolase.